A 291-amino-acid polypeptide reads, in one-letter code: Malolactic fermentation system transcriptional activator (291 aa).

The region spanning 1-60 (MSLNLRDLEYFYQLSKLRSFTNVAKHFRVSQPTISYAIKRLETYYDCDLFYKDSSHQVVD) is the HTH lysR-type domain. Residues 20–39 (FTNVAKHFRVSQPTISYAIK) constitute a DNA-binding region (H-T-H motif).

The protein belongs to the LysR transcriptional regulatory family.

Its subcellular location is the cytoplasm. Its function is as follows. Required for malolactic fermentation. It is most probably a transcriptional activator. The protein is Malolactic fermentation system transcriptional activator (mleR) of Lactococcus lactis subsp. lactis (strain IL1403) (Streptococcus lactis).